The primary structure comprises 362 residues: Neisseria adhesin A (362 aa).

An N-terminal signal peptide occupies residues 1–23 (MKHFPSKVLTTAILATFCSGALA). The head domain stretch occupies residues 24-169 (ATSDDDVKKA…NIVKIDEKLE (146 aa)). Coiled coils occupy residues 90–146 (VTNL…LNKL) and 183–288 (NDIA…KETR). The segment at 170–307 (AVADTVDKHA…SGLFQPYNVG (138 aa)) is coiled stalk domain. The next 4 beta stranded transmembrane spans lie at 307-317 (GRFNVTAAVGG), 321-332 (ESAVAIGTGFRF), 339-345 (KAGVAVG), and 351-362 (SAAYHVGVNYEW). Residues 308 to 362 (RFNVTAAVGGYKSESAVAIGTGFRFTENFAAKAGVAVGTSSGSSAAYHVGVNYEW) form a translocator domain region.

It belongs to the autotransporter-2 (AT-2) (TC 1.B.40) family. As to quaternary structure, forms high molecular weight oligomers in whole cell extracts that are not disrupted by boiling in SDS buffer. Homotrimer. A fragment containing the N-terminal half of the mature protein (residues 24-210, head domain plus part of the stalk) binds human integrin beta-1 (ITGB1). It was not seen to bind immobilized purified CEACAMs 1, 3, 5, 6 or 8 nor commercially prepared type I collagen, fibronectin or matrigel.

The protein localises to the cell surface. It is found in the cell outer membrane. In terms of biological role, adheres to and induces bacterial uptake by human epithelial cells. Upon expression in engineered Y.enterocolitica confers an 11- to 15-fold increase in bacterial adherence and uptake by human epithelial cell lines; part of the uptake is mediated by integrin beta-1 (ITGB1) suggesting it may be a human receptor for NadA. A bacterial cell surface protein; antisera against this protein induce complement-mediated killing of this and other strains. The polypeptide is Neisseria adhesin A (Neisseria meningitidis serogroup B (strain ATCC BAA-335 / MC58)).